Here is an 87-residue protein sequence, read N- to C-terminus: UPF0250 protein plu1293 (87 aa).

It belongs to the UPF0250 family.

The polypeptide is UPF0250 protein plu1293 (Photorhabdus laumondii subsp. laumondii (strain DSM 15139 / CIP 105565 / TT01) (Photorhabdus luminescens subsp. laumondii)).